The sequence spans 159 residues: uncharacterized protein (159 aa).

The next 3 helical transmembrane spans lie at 17–37 (FFFF…NLSS), 44–64 (WLIV…PLPI), and 67–87 (FSGA…DLIA).

Its subcellular location is the membrane. This is an uncharacterized protein from Saccharomyces cerevisiae (strain ATCC 204508 / S288c) (Baker's yeast).